The primary structure comprises 228 residues: Ribose-5-phosphate isomerase A (228 aa).

Residues Thr32–Thr35, Asp85–Asp88, and Lys98–Gly101 contribute to the substrate site. Glu107 (proton acceptor) is an active-site residue. Residue Lys125 coordinates substrate.

The protein belongs to the ribose 5-phosphate isomerase family. As to quaternary structure, homodimer.

The enzyme catalyses aldehydo-D-ribose 5-phosphate = D-ribulose 5-phosphate. It functions in the pathway carbohydrate degradation; pentose phosphate pathway; D-ribose 5-phosphate from D-ribulose 5-phosphate (non-oxidative stage): step 1/1. Catalyzes the reversible conversion of ribose-5-phosphate to ribulose 5-phosphate. This Cupriavidus pinatubonensis (strain JMP 134 / LMG 1197) (Cupriavidus necator (strain JMP 134)) protein is Ribose-5-phosphate isomerase A.